The primary structure comprises 273 residues: Serine acetyltransferase (273 aa).

This sequence belongs to the transferase hexapeptide repeat family. Part of the cysteine synthase complex formed at a ratio of 1 copy of this protein and 2 copies of O-acetylserine sulfhydrylase (cysK). The complex reversibly dissociates in the presence of O-acetyl-L-serine in the absence of hydrogen sulfide.

The protein resides in the cytoplasm. The catalysed reaction is L-serine + acetyl-CoA = O-acetyl-L-serine + CoA. Its pathway is amino-acid biosynthesis; L-cysteine biosynthesis; L-cysteine from L-serine: step 1/2. With respect to regulation, sensitive to feedback inhibition by L-cysteine. In Salmonella typhimurium (strain LT2 / SGSC1412 / ATCC 700720), this protein is Serine acetyltransferase (cysE).